We begin with the raw amino-acid sequence, 87 residues long: Sec-independent protein translocase protein TatA (87 aa).

The helical transmembrane segment at Ile3–Gly23 threads the bilayer. Residues Glu61–Asn87 form a disordered region.

The protein belongs to the TatA/E family. As to quaternary structure, forms a complex with TatC.

It localises to the cell inner membrane. In terms of biological role, part of the twin-arginine translocation (Tat) system that transports large folded proteins containing a characteristic twin-arginine motif in their signal peptide across membranes. TatA could form the protein-conducting channel of the Tat system. This Trichodesmium erythraeum (strain IMS101) protein is Sec-independent protein translocase protein TatA.